Reading from the N-terminus, the 62-residue chain is Metallothionein-4 (62 aa).

The a divalent metal cation site is built by Cys6, Cys8, Cys14, Cys16, Cys20, Cys22, Cys25, Cys27, Cys30, Cys34, Cys35, Cys37, Cys38, Cys42, Cys45, Cys49, Cys51, Cys58, Cys60, and Cys61.

It belongs to the metallothionein superfamily. Type 1 family. Expressed exclusively in stratified squamous epithelia associated with oral epithelia, esophagus, upper stomach, tail, footpads and neonatal skin.

Seems to bind zinc and copper. Could play a special role in regulating zinc metabolism during the differentiation of stratified epithelia. The polypeptide is Metallothionein-4 (Mt4) (Mus musculus (Mouse)).